The following is a 338-amino-acid chain: Ketol-acid reductoisomerase (NADP(+)) (338 aa).

The KARI N-terminal Rossmann domain occupies 1–181 (MKVFYDKDCD…GGGKAGIIET (181 aa)). Residues 24–27 (YGSQ), Arg47, and Ser52 contribute to the NADP(+) site. His107 is an active-site residue. Gly133 is an NADP(+) binding site. A KARI C-terminal knotted domain is found at 182-327 (TFREETETDL…EKLRAMMPWI (146 aa)). Positions 190, 194, 226, and 230 each coordinate Mg(2+). Ser251 is a substrate binding site.

This sequence belongs to the ketol-acid reductoisomerase family. It depends on Mg(2+) as a cofactor.

The enzyme catalyses (2R)-2,3-dihydroxy-3-methylbutanoate + NADP(+) = (2S)-2-acetolactate + NADPH + H(+). It carries out the reaction (2R,3R)-2,3-dihydroxy-3-methylpentanoate + NADP(+) = (S)-2-ethyl-2-hydroxy-3-oxobutanoate + NADPH + H(+). It functions in the pathway amino-acid biosynthesis; L-isoleucine biosynthesis; L-isoleucine from 2-oxobutanoate: step 2/4. The protein operates within amino-acid biosynthesis; L-valine biosynthesis; L-valine from pyruvate: step 2/4. Involved in the biosynthesis of branched-chain amino acids (BCAA). Catalyzes an alkyl-migration followed by a ketol-acid reduction of (S)-2-acetolactate (S2AL) to yield (R)-2,3-dihydroxy-isovalerate. In the isomerase reaction, S2AL is rearranged via a Mg-dependent methyl migration to produce 3-hydroxy-3-methyl-2-ketobutyrate (HMKB). In the reductase reaction, this 2-ketoacid undergoes a metal-dependent reduction by NADPH to yield (R)-2,3-dihydroxy-isovalerate. The sequence is that of Ketol-acid reductoisomerase (NADP(+)) from Albidiferax ferrireducens (strain ATCC BAA-621 / DSM 15236 / T118) (Rhodoferax ferrireducens).